The chain runs to 645 residues: Crossover junction endonuclease mus-81 (645 aa).

2 disordered regions span residues 98–119 (LAAA…RTAR) and 219–310 (GVAG…EDRK). The span at 223–252 (SANTSRNAIASGSGTSNPNRSENVNPNRQD) shows a compositional bias: polar residues. Over residues 296–305 (DSDDEDPKYD) the composition is skewed to acidic residues. The region spanning 353-459 (ELVLDTREVQ…NVVYIIENYN (107 aa)) is the ERCC4 domain.

Belongs to the XPF family. Interacts with eme-1. Mg(2+) is required as a cofactor.

Its subcellular location is the nucleus. Functionally, interacts with eme-1 to form a DNA structure-specific endonuclease with substrate preference for branched DNA structures with a 5'-end at the branch nick. Typical substrates include 3'-flap structures, D-loops, replication forks and nicked Holliday junctions. May be required in mitosis for the processing of stalled or collapsed replication fork intermediates. May be required in meiosis for the repair of meiosis-specific double strand breaks subsequent to single-end invasion (SEI). The protein is Crossover junction endonuclease mus-81 (mus-81) of Neurospora crassa (strain ATCC 24698 / 74-OR23-1A / CBS 708.71 / DSM 1257 / FGSC 987).